The primary structure comprises 544 residues: Inosine-5'-monophosphate dehydrogenase (544 aa).

CBS domains follow at residues F132–S192 and M194–S250. NAD(+) contacts are provided by residues D288 to S290 and G338 to G340. G340 and G342 together coordinate K(+). S343 contributes to the IMP binding site. C345 serves as a coordination point for K(+). The Thioimidate intermediate role is filled by C345. IMP contacts are provided by residues D378 to G380, G401 to G402, and Y425 to G429. R458 (proton acceptor) is an active-site residue. Q470 provides a ligand contact to IMP. E529, G530, and G531 together coordinate K(+).

Belongs to the IMPDH/GMPR family. Homotetramer. K(+) is required as a cofactor.

The protein localises to the cytoplasm. It carries out the reaction IMP + NAD(+) + H2O = XMP + NADH + H(+). Its pathway is purine metabolism; XMP biosynthesis via de novo pathway; XMP from IMP: step 1/1. With respect to regulation, mycophenolic acid (MPA) is a non-competitive inhibitor that prevents formation of the closed enzyme conformation by binding to the same site as the amobile flap. In contrast, mizoribine monophosphate (MZP) is a competitive inhibitor that induces the closed conformation. MPA is a potent inhibitor of mammalian IMPDHs but a poor inhibitor of the bacterial enzymes. MZP is a more potent inhibitor of bacterial IMPDH. Functionally, catalyzes the conversion of inosine 5'-phosphate (IMP) to xanthosine 5'-phosphate (XMP), the first committed and rate-limiting step in the de novo synthesis of guanine nucleotides, and therefore plays an important role in the regulation of cell growth. This chain is Inosine-5'-monophosphate dehydrogenase, found in Cryptococcus neoformans var. neoformans serotype D (strain JEC21 / ATCC MYA-565) (Filobasidiella neoformans).